Reading from the N-terminus, the 517-residue chain is Cytochrome P450 monooxygenase bsc11 (517 aa).

A helical transmembrane segment spans residues 16–33; the sequence is ALPLTCTGLIIIFAFYLS. Asn204 carries N-linked (GlcNAc...) asparagine glycosylation. Cys448 provides a ligand contact to heme.

The protein belongs to the cytochrome P450 family. Heme is required as a cofactor.

The protein resides in the membrane. It participates in mycotoxin biosynthesis. Functionally, cytochrome P450 monooxygenase; part of the gene cluster that mediates the biosynthesis of the diterpene glucoside brassicicene C. In the first step of the brassicicene C biosynthesis, the bifunctional diterpene synthase bsc8 that possesses both prenyl transferase and terpene cyclase activity, converts isopentenyl diphosphate and dimethylallyl diphosphate into geranylgeranyl diphosphate (GGDP) that is further converted into fusicocca-2,10(14)-diene, the first precursor for brassicicene C. Fusicocca-2,10(14)-diene is then substrate of cytochrome P450 monooxygenase bsc1 for hydroxylation at the C-8 position. Oxidation at C-16 position to aldehyde is then catalyzed by the cytochrome P450 monooyxygenase bsc7, yielding fusicocca-2,10(14)-diene-8-beta,16-diol. Follows the isomerization of the double bond and reduction of aldehyde to alcohol catalyzed by the short-chain dehydrogenase/reductase bsc3 to yield the diol compound fusicocca-1,10(14)-diene-8 beta,16-diol. The next step is the oxidation at the C-3 position of fusicocca-2,10(14)-diene-8-beta,16-diol catalyzed by the alpha-ketoglutarate dependent dioxygenase bsc9, to produce a triol compound. Methylation of the hydroxy group at position 16 is performed by the methyltransferase bsc6. 16-O-methylation is followed by oxidation at the C-13 position to ketone and an alkyl shift of the methyl group leads to brassicicene C. Although the probable acetyltransferase bsc4 is included in the gene cluster, no acetylation reactions are necessary for brassicicene C biosynthesis. However, the fact that brassicicene E, which is a structurally related compound having an acetoxy group at position 12, was previously isolated from another strain of A.brassicicola suggests that the ATCC 96836 strain might also produce a small amount of brassicicene E. In Alternaria brassicicola (Dark leaf spot agent), this protein is Cytochrome P450 monooxygenase bsc11.